Reading from the N-terminus, the 911-residue chain is Facilitated trehalose transporter Tret1 (911 aa).

The interval 1 to 256 (MSGRDNRGAG…RIGFQQQKAT (256 aa)) is disordered. The Cytoplasmic portion of the chain corresponds to 1–446 (MSGRDNRGAG…VYRPTTNPIY (446 aa)). A compositionally biased stretch (gly residues) spans 8–19 (GAGGGGGGGGGG). A compositionally biased stretch (basic and acidic residues) spans 32–50 (KLKEKLTRAGEELGYHRVE). 3 stretches are compositionally biased toward low complexity: residues 51–64 (SNLS…SLDT), 76–129 (AAPQ…QQLR), and 156–166 (QQIHVQQQQQQ). Ser302, Ser303, and Ser304 each carry phosphoserine. The disordered stretch occupies residues 334 to 355 (VLQGSSTDSDEEGDDAEHKRLI). Phosphoserine occurs at positions 374 and 376. Residues 380–402 (FLTSRQNFQQQRSISTDSRKSRR) form a disordered region. Over residues 384 to 395 (RQNFQQQRSIST) the composition is skewed to polar residues. The helical transmembrane segment at 447–467 (IWTQVLAALSVSLGSLVVGFA) threads the bilayer. Residues 468-494 (SAYTSPALVSMTNTNLTSFVVTPQAAS) are Extracellular-facing. An N-linked (GlcNAc...) asparagine glycan is attached at Asn482. Residues 495-515 (WVGGIMPLAGLAGGIAGGPFI) form a helical membrane-spanning segment. The Cytoplasmic segment spans residues 516–527 (EYLGRRNTILAT). A helical membrane pass occupies residues 528–548 (AVPFIVSWLLIACAVNVIMVL). At 549–551 (CGR) the chain is on the extracellular side. The helical transmembrane segment at 552-572 (FLAGFCVGIASLSLPVYLGET) threads the bilayer. The Cytoplasmic segment spans residues 573-578 (VQPEVR). Residues 579-599 (GTLGLLPTAFGNIGILLCFVA) form a helical membrane-spanning segment. Residues 600–606 (GTYMDWS) are Extracellular-facing. A helical membrane pass occupies residues 607-627 (MLAFLGASLPVPFLILMFLIP). Topologically, residues 628–690 (ETPRWYVSRG…ELLKRSNLKP (63 aa)) are cytoplasmic. The helical transmembrane segment at 691–711 (LSISLGLMFFQQLSGINAVIF) threads the bilayer. Over 712 to 727 (YTVQIFQDAGSTIDGN) the chain is Extracellular. The chain crosses the membrane as a helical span at residues 728-748 (VCTIIVGVVNFAATFIATILI). At 749–754 (DRAGRK) the chain is on the cytoplasmic side. A helical membrane pass occupies residues 755 to 775 (VLLYVSNVMMVLTLFVLGGFF). Residues 776-794 (YCKSSGMDTSNVGWLPLSC) are Extracellular-facing. Residues 795-815 (FVIYILGFSLGFGPIPWLMMG) traverse the membrane as a helical segment. Residues 816-821 (EILPAK) are Cytoplasmic-facing. Residues 822–842 (IRGSAASVATAFNWSCTFVVT) traverse the membrane as a helical segment. At 843–855 (KSFQDMIDFMGAH) the chain is on the extracellular side. A helical membrane pass occupies residues 856–876 (GAFWMFGAICFIGLFFVIFYV). At 877–911 (PETQGKTLEDIERKMMGRVRRMSSVANIKPLSFNM) the chain is on the cytoplasmic side. Ser899 and Ser900 each carry phosphoserine.

The protein belongs to the major facilitator superfamily. Sugar transporter (TC 2.A.1.1) family. Trehalose transporter subfamily.

Its subcellular location is the cell membrane. In terms of biological role, low-capacity facilitative transporter for trehalose. Does not transport maltose, sucrose or lactose. Mediates the bidirectional transfer of trehalose. Responsible for the transport of trehalose synthesized in the fat body and the incorporation of trehalose into other tissues that require a carbon source, thereby regulating trehalose levels in the hemolymph. In Drosophila virilis (Fruit fly), this protein is Facilitated trehalose transporter Tret1.